We begin with the raw amino-acid sequence, 100 residues long: Large ribosomal subunit protein uL23 (100 aa).

Belongs to the universal ribosomal protein uL23 family. Part of the 50S ribosomal subunit. Contacts protein L29, and trigger factor when it is bound to the ribosome.

In terms of biological role, one of the early assembly proteins it binds 23S rRNA. One of the proteins that surrounds the polypeptide exit tunnel on the outside of the ribosome. Forms the main docking site for trigger factor binding to the ribosome. This chain is Large ribosomal subunit protein uL23, found in Synechococcus sp. (strain CC9605).